The primary structure comprises 284 residues: Pantothenate synthetase (284 aa).

30 to 37 (MGFLHEGH) is a binding site for ATP. Histidine 37 acts as the Proton donor in catalysis. Glutamine 61 serves as a coordination point for (R)-pantoate. Residue glutamine 61 coordinates beta-alanine. An ATP-binding site is contributed by 147–150 (GRKD). Glutamine 153 is a (R)-pantoate binding site. Residues valine 176 and 184 to 187 (MSSR) contribute to the ATP site.

Belongs to the pantothenate synthetase family. As to quaternary structure, homodimer.

The protein resides in the cytoplasm. It carries out the reaction (R)-pantoate + beta-alanine + ATP = (R)-pantothenate + AMP + diphosphate + H(+). It participates in cofactor biosynthesis; (R)-pantothenate biosynthesis; (R)-pantothenate from (R)-pantoate and beta-alanine: step 1/1. Functionally, catalyzes the condensation of pantoate with beta-alanine in an ATP-dependent reaction via a pantoyl-adenylate intermediate. This chain is Pantothenate synthetase, found in Pelobacter propionicus (strain DSM 2379 / NBRC 103807 / OttBd1).